An 84-amino-acid chain; its full sequence is Small ribosomal subunit protein eS27w (84 aa).

Residues 39 to 61 form a C4-type zinc finger; that stretch reads CQGCFNITTVFSHSQTVVVCGNC.

Belongs to the eukaryotic ribosomal protein eS27 family. The cofactor is Zn(2+).

This chain is Small ribosomal subunit protein eS27w (RPS27D), found in Arabidopsis thaliana (Mouse-ear cress).